The chain runs to 611 residues: Pseudomonine synthase PmsE (611 aa).

The 76-residue stretch at Val533–Gln608 folds into the Carrier domain. Ser569 is modified (O-(pantetheine 4'-phosphoryl)serine).

The protein belongs to the ATP-dependent AMP-binding enzyme family. The cofactor is pantetheine 4'-phosphate.

It catalyses the reaction salicylate + holo-[ACP] + ATP = salicyl-[ACP] + AMP + diphosphate. Its pathway is siderophore biosynthesis; pseudomonine biosynthesis. Involved in the biosynthesis of the siderophore pseudomonine. Specifically adenylates salicylate and loads it onto its peptidyl carrier domain, via a thioester linkage to the phosphopanthetheine moiety. The polypeptide is Pseudomonine synthase PmsE (Pseudomonas entomophila (strain L48)).